The following is a 466-amino-acid chain: Alpha-1,3-mannosyltransferase CMT1 (466 aa).

The segment at 1 to 23 is disordered; it reads MFRNTLRTFPRPATPSLPTSSHS. The Cytoplasmic portion of the chain corresponds to 1-33; sequence MFRNTLRTFPRPATPSLPTSSHSPIARASLSKS. A helical; Signal-anchor for type II membrane protein transmembrane segment spans residues 34–54; sequence PLFVLSLVLVCIFFLSFLSHP. The Lumenal portion of the chain corresponds to 55-466; it reads DPSARKLQWP…ETRWVQPWLE (412 aa).

Mg(2+) is required as a cofactor. Requires Mn(2+) as cofactor. It depends on Co(2+) as a cofactor.

The protein resides in the golgi apparatus membrane. It functions in the pathway protein modification; protein glycosylation. Functionally, responsible for addition of mannose residues in an alpha-1,3 linkage to a polymannosly precursor. May be involved in synthesis of capsule glucuronoxylomannan. In Cryptococcus neoformans var. neoformans serotype D (strain JEC21 / ATCC MYA-565) (Filobasidiella neoformans), this protein is Alpha-1,3-mannosyltransferase CMT1.